The chain runs to 113 residues: Large ribosomal subunit protein bL17 (113 aa).

This sequence belongs to the bacterial ribosomal protein bL17 family. Part of the 50S ribosomal subunit. Contacts protein L32.

The chain is Large ribosomal subunit protein bL17 from Symbiobacterium thermophilum (strain DSM 24528 / JCM 14929 / IAM 14863 / T).